The chain runs to 68 residues: MCLYCWDIEPSQVNPEGPRQHHPSEVTERQLANKRIQNMQHLKKEKRRLNKRFSRPSPIPEPGLLWSS.

Residues 11–68 (SQVNPEGPRQHHPSEVTERQLANKRIQNMQHLKKEKRRLNKRFSRPSPIPEPGLLWSS) are disordered. Residues 18 to 28 (PRQHHPSEVTE) show a composition bias toward basic and acidic residues. A coiled-coil region spans residues 27–53 (TERQLANKRIQNMQHLKKEKRRLNKRF). Residues 41 to 54 (HLKKEKRRLNKRFS) are compositionally biased toward basic residues.

This Homo sapiens (Human) protein is Coiled-coil domain-containing protein 179 (CCDC179).